The primary structure comprises 496 residues: Proline--tRNA ligase (496 aa).

It belongs to the class-II aminoacyl-tRNA synthetase family. ProS type 3 subfamily. As to quaternary structure, homodimer.

It is found in the cytoplasm. The catalysed reaction is tRNA(Pro) + L-proline + ATP = L-prolyl-tRNA(Pro) + AMP + diphosphate. Catalyzes the attachment of proline to tRNA(Pro) in a two-step reaction: proline is first activated by ATP to form Pro-AMP and then transferred to the acceptor end of tRNA(Pro). The protein is Proline--tRNA ligase of Phocaeicola vulgatus (strain ATCC 8482 / DSM 1447 / JCM 5826 / CCUG 4940 / NBRC 14291 / NCTC 11154) (Bacteroides vulgatus).